The primary structure comprises 513 residues: MKRALVSVSDKNNLVPFVKGLVANDYEIVSTGGTKRVLDEAGIPTISVEDVTGFPEILDGRVKTLNPYIHGGLLARRELPEHVATLKEHKITPIDLVCVNLYPFKQTIEKPDVTLAEAIENIDIGGPSMVRSASKNYRDVTIVVDQADYDQVLAEIEKDGSTSLETRARLAAKAFRLTASYDALISQYLTEKAGETAPEKLTLTYDLKEAMRYGENSHQKAWLYEDALPKAFSVLQAEQLNGKELSYNNIKDADEALRCVREFSKPTVVAMKHMNPCGIGQGNTLEEAWDRAYVADPVSIFGGVIALNRKVDLATAEKMHKIFLEIIIAPDYDEDALAALKTKKKNLRILKLDFSKKDEATSKETVSVMGGLLVQDQDVLDEDFADWECVTEAKPTQEQLESLLFAWKAVKHTKSNAIVVANNERTLGVGAGQPNRIDSEKIAIDHAAEALDDRAVLASDAFFPFSDCVEYAGKHGIKAIVQPGGSVRDQESIDMANKYGIAMVFTGVRHFRH.

The region spanning 1-144 is the MGS-like domain; it reads MKRALVSVSD…KNYRDVTIVV (144 aa).

This sequence belongs to the PurH family.

It carries out the reaction (6R)-10-formyltetrahydrofolate + 5-amino-1-(5-phospho-beta-D-ribosyl)imidazole-4-carboxamide = 5-formamido-1-(5-phospho-D-ribosyl)imidazole-4-carboxamide + (6S)-5,6,7,8-tetrahydrofolate. The catalysed reaction is IMP + H2O = 5-formamido-1-(5-phospho-D-ribosyl)imidazole-4-carboxamide. It functions in the pathway purine metabolism; IMP biosynthesis via de novo pathway; 5-formamido-1-(5-phospho-D-ribosyl)imidazole-4-carboxamide from 5-amino-1-(5-phospho-D-ribosyl)imidazole-4-carboxamide (10-formyl THF route): step 1/1. The protein operates within purine metabolism; IMP biosynthesis via de novo pathway; IMP from 5-formamido-1-(5-phospho-D-ribosyl)imidazole-4-carboxamide: step 1/1. In Lactobacillus delbrueckii subsp. bulgaricus (strain ATCC BAA-365 / Lb-18), this protein is Bifunctional purine biosynthesis protein PurH.